The following is a 223-amino-acid chain: Phosphoribosylformylglycinamidine synthase subunit PurQ (223 aa).

Residues Phe-4 to Lys-223 enclose the Glutamine amidotransferase type-1 domain. Cys-85 functions as the Nucleophile in the catalytic mechanism. Active-site residues include His-196 and Glu-198.

As to quaternary structure, part of the FGAM synthase complex composed of 1 PurL, 1 PurQ and 2 PurS subunits.

It is found in the cytoplasm. The catalysed reaction is N(2)-formyl-N(1)-(5-phospho-beta-D-ribosyl)glycinamide + L-glutamine + ATP + H2O = 2-formamido-N(1)-(5-O-phospho-beta-D-ribosyl)acetamidine + L-glutamate + ADP + phosphate + H(+). The enzyme catalyses L-glutamine + H2O = L-glutamate + NH4(+). It participates in purine metabolism; IMP biosynthesis via de novo pathway; 5-amino-1-(5-phospho-D-ribosyl)imidazole from N(2)-formyl-N(1)-(5-phospho-D-ribosyl)glycinamide: step 1/2. In terms of biological role, part of the phosphoribosylformylglycinamidine synthase complex involved in the purines biosynthetic pathway. Catalyzes the ATP-dependent conversion of formylglycinamide ribonucleotide (FGAR) and glutamine to yield formylglycinamidine ribonucleotide (FGAM) and glutamate. The FGAM synthase complex is composed of three subunits. PurQ produces an ammonia molecule by converting glutamine to glutamate. PurL transfers the ammonia molecule to FGAR to form FGAM in an ATP-dependent manner. PurS interacts with PurQ and PurL and is thought to assist in the transfer of the ammonia molecule from PurQ to PurL. The protein is Phosphoribosylformylglycinamidine synthase subunit PurQ of Pyrococcus horikoshii (strain ATCC 700860 / DSM 12428 / JCM 9974 / NBRC 100139 / OT-3).